The chain runs to 183 residues: MTEMKILIVTLTYIEKSIIDEIVNNLSSYGLEVDILFDSRKYLPISAFNWERLQYDAEKVLSFLKSKYDFNYDSIIFLADSDGYIDGYNFVFGLTIDNFAIIFLNRLREEFYNRKPDLELFMKRVVKEVTHEAGHTLGLGHCNTIGCVMNFSNTVEDVDKKQARFCKNCIYKIENLSKYLQRK.

A Zn(2+)-binding site is contributed by histidine 131. The Proton acceptor role is filled by glutamate 132. Zn(2+) is bound by residues histidine 135, histidine 141, cysteine 142, cysteine 147, cysteine 166, and cysteine 169.

The protein belongs to the peptidase M54 family. In terms of assembly, monomer. Zn(2+) is required as a cofactor.

Its function is as follows. Probable zinc metalloprotease whose natural substrate is unknown. In Saccharolobus islandicus (strain L.S.2.15 / Lassen #1) (Sulfolobus islandicus), this protein is Archaemetzincin.